A 156-amino-acid chain; its full sequence is ATP synthase subunit b (156 aa).

A helical membrane pass occupies residues 3 to 23 (ITFTIFAQSLAFAALIWIVAT).

It belongs to the ATPase B chain family. In terms of assembly, F-type ATPases have 2 components, F(1) - the catalytic core - and F(0) - the membrane proton channel. F(1) has five subunits: alpha(3), beta(3), gamma(1), delta(1), epsilon(1). F(0) has three main subunits: a(1), b(2) and c(10-14). The alpha and beta chains form an alternating ring which encloses part of the gamma chain. F(1) is attached to F(0) by a central stalk formed by the gamma and epsilon chains, while a peripheral stalk is formed by the delta and b chains.

It localises to the cell inner membrane. F(1)F(0) ATP synthase produces ATP from ADP in the presence of a proton or sodium gradient. F-type ATPases consist of two structural domains, F(1) containing the extramembraneous catalytic core and F(0) containing the membrane proton channel, linked together by a central stalk and a peripheral stalk. During catalysis, ATP synthesis in the catalytic domain of F(1) is coupled via a rotary mechanism of the central stalk subunits to proton translocation. In terms of biological role, component of the F(0) channel, it forms part of the peripheral stalk, linking F(1) to F(0). The chain is ATP synthase subunit b from Xylella fastidiosa (strain M23).